The following is a 370-amino-acid chain: Histidinol-phosphate aminotransferase (370 aa).

An N6-(pyridoxal phosphate)lysine modification is found at lysine 222.

This sequence belongs to the class-II pyridoxal-phosphate-dependent aminotransferase family. Histidinol-phosphate aminotransferase subfamily. In terms of assembly, homodimer. Requires pyridoxal 5'-phosphate as cofactor.

It carries out the reaction L-histidinol phosphate + 2-oxoglutarate = 3-(imidazol-4-yl)-2-oxopropyl phosphate + L-glutamate. The protein operates within amino-acid biosynthesis; L-histidine biosynthesis; L-histidine from 5-phospho-alpha-D-ribose 1-diphosphate: step 7/9. The chain is Histidinol-phosphate aminotransferase from Bacillus cytotoxicus (strain DSM 22905 / CIP 110041 / 391-98 / NVH 391-98).